A 543-amino-acid chain; its full sequence is MAKGEGAESGSAAGLLPTSILQSTERPAQVKKEPKKKKQQLSVCNKLCYALGGAPYQVTGCALGFFLQIYLLDVAQKDEEVVFCFSSFQVGPFSASIILFVGRAWDAITDPLVGLCISKSPWTCLGRLMPWIIFSTPLAVIAYFLIWFVPDFPHGQTYWYLLFYCLFETMVTCFHVPYSALTMFISTEQTERDSATAYRMTVEVLGTVLGTAIQGQIVGQADTPCFQDLNSSTVASQSANHTHGTTSHRETQKAYLLAAGVIVCIYIICAVILILGVREQREPYEAQQSEPIAYFRGLRLVMSHGPYIKLITGFLFTSLAFMLVEGNFVLFCTYTLGFRNEFQNLLLAIMLSATLTIPIWQWFLTRFGKKTAVYVGISSAVPFLILVALMESNLIITYAVAVAAGISVAAAFLLPWSMLPDVIDDFHLKQPHFHGTEPIFFSFYVFFTKFASGVSLGISTLSLDFAGYQTRGCSQPERVKFTLNMLVTMAPIVLILLGLLLFKMYPIDEERRRQNKKALQALRDEASSSGCSETDSTELASIL.

Positions 1-14 (MAKGEGAESGSAAG) are enriched in low complexity. The segment at 1–34 (MAKGEGAESGSAAGLLPTSILQSTERPAQVKKEP) is disordered. The Cytoplasmic portion of the chain corresponds to 1 to 40 (MAKGEGAESGSAAGLLPTSILQSTERPAQVKKEPKKKKQQ). The chain crosses the membrane as a helical span at residues 41–70 (LSVCNKLCYALGGAPYQVTGCALGFFLQIY). Residues 71–94 (LLDVAQKDEEVVFCFSSFQVGPFS) are Extracellular-facing. A helical transmembrane segment spans residues 95–115 (ASIILFVGRAWDAITDPLVGL). Residues 116-127 (CISKSPWTCLGR) are Cytoplasmic-facing. Residues 128 to 147 (LMPWIIFSTPLAVIAYFLIW) form a helical membrane-spanning segment. The Extracellular portion of the chain corresponds to 148–157 (FVPDFPHGQT). A helical membrane pass occupies residues 158-182 (YWYLLFYCLFETMVTCFHVPYSALT). Residues 183 to 189 (MFISTEQ) lie on the Cytoplasmic side of the membrane. Residues 190 to 221 (TERDSATAYRMTVEVLGTVLGTAIQGQIVGQA) form a helical membrane-spanning segment. At 222–241 (DTPCFQDLNSSTVASQSANH) the chain is on the extracellular side. Cysteines 225 and 473 form a disulfide. Residues N230 and N240 are each glycosylated (N-linked (GlcNAc...) asparagine). Residues 242–275 (THGTTSHRETQKAYLLAAGVIVCIYIICAVILIL) traverse the membrane as a helical segment. Residues 276 to 306 (GVREQREPYEAQQSEPIAYFRGLRLVMSHGP) lie on the Cytoplasmic side of the membrane. The helical transmembrane segment at 307 to 333 (YIKLITGFLFTSLAFMLVEGNFVLFCT) threads the bilayer. Residues 334 to 344 (YTLGFRNEFQN) are Extracellular-facing. The chain crosses the membrane as a helical span at residues 345–363 (LLLAIMLSATLTIPIWQWF). The Cytoplasmic portion of the chain corresponds to 364 to 367 (LTRF). A helical membrane pass occupies residues 368–389 (GKKTAVYVGISSAVPFLILVAL). Topologically, residues 390–392 (MES) are extracellular. The helical transmembrane segment at 393–429 (NLIITYAVAVAAGISVAAAFLLPWSMLPDVIDDFHLK) threads the bilayer. Topologically, residues 430–439 (QPHFHGTEPI) are cytoplasmic. Residues 440 to 466 (FFSFYVFFTKFASGVSLGISTLSLDFA) form a helical membrane-spanning segment. The Extracellular portion of the chain corresponds to 467–478 (GYQTRGCSQPER). Residues 479–502 (VKFTLNMLVTMAPIVLILLGLLLF) traverse the membrane as a helical segment. At 503-543 (KMYPIDEERRRQNKKALQALRDEASSSGCSETDSTELASIL) the chain is on the cytoplasmic side.

It belongs to the major facilitator superfamily. As to quaternary structure, interacts with ERVFRD-1/syncytin-2. In placenta, associated with trophoblast cells.

It is found in the cell membrane. The protein localises to the endoplasmic reticulum membrane. The enzyme catalyses a 1-acyl-sn-glycero-3-phosphocholine(in) + Na(+)(in) = a 1-acyl-sn-glycero-3-phosphocholine(out) + Na(+)(out). It catalyses the reaction 1-(4Z,7Z,10Z,13Z,16Z,19Z-docosahexaenoyl)-sn-glycero-3-phosphocholine(in) + Na(+)(in) = 1-(4Z,7Z,10Z,13Z,16Z,19Z-docosahexaenoyl)-sn-glycero-3-phosphocholine(out) + Na(+)(out). It carries out the reaction 1-(9Z-octadecenoyl)-sn-glycero-3-phosphocholine(in) + Na(+)(in) = 1-(9Z-octadecenoyl)-sn-glycero-3-phosphocholine(out) + Na(+)(out). The catalysed reaction is 1-hexadecanoyl-sn-glycero-3-phosphocholine(in) + Na(+)(in) = 1-hexadecanoyl-sn-glycero-3-phosphocholine(out) + Na(+)(out). The enzyme catalyses a 1-acyl-sn-glycero-3-phosphoethanolamine(in) + Na(+)(in) = a 1-acyl-sn-glycero-3-phosphoethanolamine(out) + Na(+)(out). In terms of biological role, sodium-dependent lysophosphatidylcholine (LPC) symporter, which plays an essential role for blood-brain barrier formation and function. Specifically expressed in endothelium of the blood-brain barrier of micro-vessels and transports LPC into the brain. Transport of LPC is essential because it constitutes the major mechanism by which docosahexaenoic acid (DHA), an omega-3 fatty acid that is essential for normal brain growth and cognitive function, enters the brain. Transports LPC carrying long-chain fatty acids such LPC oleate and LPC palmitate with a minimum acyl chain length of 14 carbons. Does not transport docosahexaenoic acid in unesterified fatty acid. Specifically required for blood-brain barrier formation and function, probably by mediating lipid transport. Not required for central nervous system vascular morphogenesis. Acts as a transporter for tunicamycin, an inhibitor of asparagine-linked glycosylation. In placenta, acts as a receptor for ERVFRD-1/syncytin-2 and is required for trophoblast fusion. This Homo sapiens (Human) protein is Sodium-dependent lysophosphatidylcholine symporter 1.